The chain runs to 173 residues: Lipoprotein signal peptidase (173 aa).

2 consecutive transmembrane segments (helical) span residues 67 to 87 and 92 to 112; these read WISLLVSVGLCVYALVGPHLG and MGFGLLLGGAVGNGFDRFAFG. Catalysis depends on residues Asp-116 and Asp-132. A helical membrane pass occupies residues 125-145; that stretch reads FPVFNGADIAINLGLACLLIG. The tract at residues 151-173 is disordered; sequence SRTPAPARPASKQIREPTDTTGG. The segment covering 163–173 has biased composition (basic and acidic residues); the sequence is QIREPTDTTGG.

Belongs to the peptidase A8 family.

The protein resides in the cell inner membrane. The catalysed reaction is Release of signal peptides from bacterial membrane prolipoproteins. Hydrolyzes -Xaa-Yaa-Zaa-|-(S,diacylglyceryl)Cys-, in which Xaa is hydrophobic (preferably Leu), and Yaa (Ala or Ser) and Zaa (Gly or Ala) have small, neutral side chains.. The protein operates within protein modification; lipoprotein biosynthesis (signal peptide cleavage). Functionally, this protein specifically catalyzes the removal of signal peptides from prolipoproteins. The polypeptide is Lipoprotein signal peptidase (Gloeobacter violaceus (strain ATCC 29082 / PCC 7421)).